A 57-amino-acid chain; its full sequence is Small hydrophobic protein (57 aa).

Over 1 to 8 the chain is Virion surface; the sequence is MPAIQPPL. A helical membrane pass occupies residues 9–29; that stretch reads YPTFLLLILLSLIITLYAWII. The Intravirion portion of the chain corresponds to 30–57; it reads STITYKTAMRHAALYQRSFFRWSFDHSL.

It belongs to the rubulavirus small hydrophobic protein family. Interacts with host TNFRSF1A, RIPK1 and IRAK1; these interactions interfere with host NF-kappa-B activation at the level of receptor complexes. Interacts with host protein UBQLN4.

The protein localises to the virion membrane. Its subcellular location is the host cell membrane. Its function is as follows. Plays a role in the inhibition of the host NF-kappa-B pathway. This inhibition occurs at the receptor level, by preventing the signaling of TNFR1 as well as IL-1R and TLR3. The sequence is that of Small hydrophobic protein (SH) from Homo sapiens (Human).